Here is a 588-residue protein sequence, read N- to C-terminus: Tetratricopeptide repeat protein 39B (588 aa).

3 TPR repeats span residues 294–327 (SIIL…QQEW), 485–518 (CLVQ…EKRV), and 526–559 (PFTF…YKDY).

The protein belongs to the TTC39 family.

Functionally, may be involved in lipid metabolism. The polypeptide is Tetratricopeptide repeat protein 39B (ttc39b) (Xenopus tropicalis (Western clawed frog)).